The following is a 1175-amino-acid chain: Structural maintenance of chromosomes protein 2-1 (1175 aa).

A Zinc-hook domain is found at 2–1161 (HIKEICLEGF…NVLFRTKFVD (1160 aa)). 32 to 39 (GLNGSGKS) contacts ATP. A coiled-coil region spans residues 172–508 (RMYENKKEAA…AQLANFQFTY (337 aa)). An SMC hinge domain is found at 518–638 (SKVKGVVAKL…KTTDVAKEVA (121 aa)). The stretch at 673–1028 (LRKLHDLAEA…ELDEKKKETL (356 aa)) forms a coiled coil.

Belongs to the SMC family. SMC2 subfamily. Forms a heterodimer with SMC4. Component of the condensin complex, which contains the SMC2 and SMC4 heterodimer, and three non SMC subunits that probably regulate the complex: CAPH, CAPD2 and CAPG. As to expression, highly expressed in roots and young floral buds.

It localises to the nucleus. Its function is as follows. Central component of the condensin complex, a complex required for conversion of interphase chromatin into mitotic-like condense chromosomes. The condensin complex probably introduces positive supercoils into relaxed DNA in the presence of type I topoisomerases and converts nicked DNA into positive knotted forms in the presence of type II topoisomerases. Also involved in chromosome segregation in meiosis. In Arabidopsis thaliana (Mouse-ear cress), this protein is Structural maintenance of chromosomes protein 2-1 (SMC2-1).